The chain runs to 155 residues: Large ribosomal subunit protein uL13 (155 aa).

This sequence belongs to the universal ribosomal protein uL13 family. As to quaternary structure, part of the 50S ribosomal subunit.

Its function is as follows. This protein is one of the early assembly proteins of the 50S ribosomal subunit, although it is not seen to bind rRNA by itself. It is important during the early stages of 50S assembly. This chain is Large ribosomal subunit protein uL13, found in Rickettsia bellii (strain OSU 85-389).